The primary structure comprises 120 residues: Large ribosomal subunit protein uL18 (120 aa).

It belongs to the universal ribosomal protein uL18 family. As to quaternary structure, part of the 50S ribosomal subunit; part of the 5S rRNA/L5/L18/L25 subcomplex. Contacts the 5S and 23S rRNAs.

Functionally, this is one of the proteins that bind and probably mediate the attachment of the 5S RNA into the large ribosomal subunit, where it forms part of the central protuberance. This is Large ribosomal subunit protein uL18 from Clostridium botulinum (strain Eklund 17B / Type B).